Here is a 118-residue protein sequence, read N- to C-terminus: uncharacterized protein (118 aa).

A disulfide bridge connects residues Cys11 and Cys14.

The protein belongs to the ArsC family.

This is an uncharacterized protein from Bacillus subtilis (strain 168).